Reading from the N-terminus, the 88-residue chain is Cell division topological specificity factor (88 aa).

The protein belongs to the MinE family.

Its function is as follows. Prevents the cell division inhibition by proteins MinC and MinD at internal division sites while permitting inhibition at polar sites. This ensures cell division at the proper site by restricting the formation of a division septum at the midpoint of the long axis of the cell. The protein is Cell division topological specificity factor of Clostridium botulinum (strain Alaska E43 / Type E3).